Consider the following 260-residue polypeptide: Carbonic anhydrase 2 (260 aa).

The 257-residue stretch at 3–259 (HHWGYDSHNG…LKSREVRASF (257 aa)) folds into the Alpha-carbonic anhydrase domain. Residue H64 is the Proton donor/acceptor of the active site. H94, H96, and H119 together coordinate Zn(2+). 198-199 (TT) serves as a coordination point for substrate.

The protein belongs to the alpha-carbonic anhydrase family. Zn(2+) serves as cofactor.

The protein resides in the cytoplasm. It localises to the cell membrane. The catalysed reaction is hydrogencarbonate + H(+) = CO2 + H2O. It catalyses the reaction urea = cyanamide + H2O. With respect to regulation, inhibited by acetazolamide. Functionally, catalyzes the reversible hydration of carbon dioxide. Can also hydrate cyanamide to urea. This chain is Carbonic anhydrase 2 (CA2), found in Gallus gallus (Chicken).